A 120-amino-acid polypeptide reads, in one-letter code: Glycine cleavage system H protein (120 aa).

Residues 19–101 (DGTVGITDHA…YEGGWLFKLE (83 aa)) form the Lipoyl-binding domain. An N6-lipoyllysine modification is found at K60.

The protein belongs to the GcvH family. In terms of assembly, the glycine cleavage system is composed of four proteins: P, T, L and H. (R)-lipoate serves as cofactor.

In terms of biological role, the glycine cleavage system catalyzes the degradation of glycine. The H protein shuttles the methylamine group of glycine from the P protein to the T protein. The polypeptide is Glycine cleavage system H protein (Deinococcus deserti (strain DSM 17065 / CIP 109153 / LMG 22923 / VCD115)).